The following is a 911-amino-acid chain: MHRVMTIHPDIAPPPDLPAPAEPPAKVSPMMEQYHEIKAANPGLLLFYRMGDFYELFFEDAEIASRALGITLTKRGKHQGMDIPMCGVPVERSDDYLHRLIALGHRVAVCEQTEDPAAARARKSVVRRDVVRLITPGTLTEDTLLDARANNYLLAIARARGSSGTDRIGLAWIDISTGEFSVTECATGELSATLARINPNEAIVSDALYSDAELGPSLRELAAVTPLTRDVFDSATAERRLCDYFAVATMDGLAALSRLEAAAAAACVTYVDRTQLGKRPPLSPPSREATGATMAIDPATRANLELTRTLAGERRGSLLDAIDCTVTAAGSRLLAQRLAAPLTDAAAIARRLDAVEVFVVAPALREQIRSALRAAPDMARALARLSLGRGGPRDLASLRDGIVAADQGLQQLSQLTAPPQEIAAAMAALRRPSRDLCDELGRALADDLPLQKRDGGFVRDGYEAALDETRKLRDASRLVVAAMQARYADDTGVKGLKIRHNNVLGYFVEVTAQHGDRLMAPPLNATFIHRQTLAGQVRFTTAELGEIEAKIANAGDRALGLELEIFDRLAALIETAGEDLRAAAHAFALLDVATALAKLASDDNYVRPEVDQSLSFAIEGGRHPVVEQALKRAGEPFIANACDLSPGPAQASGQIWLLTGPNMAGKSTFLRQNALIALLAQTGSYVPAARARIGIVDRLFSRVGAADDLARGRSTFMVEMVETAAILNQATERALVILDEIGRGTATFDGLSIAWAAIEHLHEQNRCRALFATHYHELTALSAKLPRLFNATVRVKEWRGEVVFLHEVLPGSADRSYGIQVAKLAGLPASVVARAKSVLAKLEANDRGQPKALIDDLPLFAITARAPAEPSPPSEAEQLIAAVQALHPDELSPREALDALYALKAKLPKTT.

Residue 660–667 participates in ATP binding; the sequence is GPNMAGKS.

Belongs to the DNA mismatch repair MutS family.

Its function is as follows. This protein is involved in the repair of mismatches in DNA. It is possible that it carries out the mismatch recognition step. This protein has a weak ATPase activity. This is DNA mismatch repair protein MutS from Rhodopseudomonas palustris (strain HaA2).